Here is a 150-residue protein sequence, read N- to C-terminus: 3-hydroxyacyl-[acyl-carrier-protein] dehydratase FabZ (150 aa).

His52 is a catalytic residue.

Belongs to the thioester dehydratase family. FabZ subfamily.

Its subcellular location is the cytoplasm. The enzyme catalyses a (3R)-hydroxyacyl-[ACP] = a (2E)-enoyl-[ACP] + H2O. Its function is as follows. Involved in unsaturated fatty acids biosynthesis. Catalyzes the dehydration of short chain beta-hydroxyacyl-ACPs and long chain saturated and unsaturated beta-hydroxyacyl-ACPs. The sequence is that of 3-hydroxyacyl-[acyl-carrier-protein] dehydratase FabZ from Cupriavidus metallidurans (strain ATCC 43123 / DSM 2839 / NBRC 102507 / CH34) (Ralstonia metallidurans).